Reading from the N-terminus, the 94-residue chain is Integration host factor subunit beta (94 aa).

It belongs to the bacterial histone-like protein family. In terms of assembly, heterodimer of an alpha and a beta chain.

In terms of biological role, this protein is one of the two subunits of integration host factor, a specific DNA-binding protein that functions in genetic recombination as well as in transcriptional and translational control. The protein is Integration host factor subunit beta of Edwardsiella ictaluri (strain 93-146).